A 721-amino-acid chain; its full sequence is Xylosyl- and glucuronyltransferase LARGE2 (721 aa).

Topologically, residues Met-1 to Arg-8 are cytoplasmic. A helical; Signal-anchor for type II membrane protein transmembrane segment spans residues Ala-9–Gly-29. The Lumenal segment spans residues Asp-30–Gly-721. Positions Asp-59 to Pro-89 are disordered. 2 N-linked (GlcNAc...) asparagine glycosylation sites follow: Asn-80 and Asn-107. Positions Leu-97–Arg-372 are xylosyltransferase activity. Mn(2+)-binding residues include Asp-201 and Asp-203. N-linked (GlcNAc...) asparagine glycosylation is present at Asn-231. Residues Arg-373 to Pro-715 form a glucuronyltransferase activity region. Mn(2+) contacts are provided by Asp-521 and Asp-523.

The protein in the C-terminal section; belongs to the glycosyltransferase 49 family. It in the N-terminal section; belongs to the glycosyltransferase 8 family. Interacts with B4GAT1. Mn(2+) is required as a cofactor. Widely expressed. Expressed at high level in placenta, pancreas and kidney compared to LARGE. Not expressed in brain.

It is found in the golgi apparatus membrane. It catalyses the reaction 3-O-[beta-D-GlcA-(1-&gt;3)-beta-D-Xyl-(1-&gt;4)-Rib-ol-P-Rib-ol-P-3-beta-D-GalNAc-(1-&gt;3)-beta-D-GlcNAc-(1-&gt;4)-(O-6-P-alpha-D-Man)]-Thr-[protein] + UDP-alpha-D-xylose = 3-O-[alpha-D-Xyl-(1-&gt;3)-beta-D-GlcA-(1-&gt;4)-beta-D-Xyl-(1-&gt;4)-Rib-ol-P-Rib-ol-P-3-beta-D-GalNAc-(1-&gt;3)-beta-D-GlcNAc-(1-&gt;4)-(O-6-P-alpha-D-Man)]-Thr-[protein] + UDP + H(+). The catalysed reaction is 3-O-{(1-&gt;[3)-alpha-D-Xyl-(1-&gt;3)-beta-D-GlcA-(1-&gt;](n)-4)-beta-D-Xyl-(1-&gt;4)-Rib-ol-P-Rib-ol-P-3-beta-D-GalNAc-(1-&gt;3)-beta-D-GlcNAc-(1-&gt;4)-O-6-P-alpha-D-Man}-L-Thr-[protein] + UDP-alpha-D-glucuronate = 3-O-{beta-D-GlcA-(1-&gt;[3)-alpha-D-Xyl-(1-&gt;3)-beta-D-GlcA-(1-&gt;](n)-4)-beta-D-Xyl-(1-&gt;4)-Rib-ol-P-Rib-ol-P-3-beta-D-GalNAc-(1-&gt;3)-beta-D-GlcNAc-(1-&gt;4)-O-6-P-alpha-D-Man}-L-Thr-[protein] + UDP + H(+). It carries out the reaction 3-O-{beta-D-GlcA-(1-&gt;[3)-alpha-D-Xyl-(1-&gt;3)-beta-D-GlcA-(1-&gt;](n)-4)-beta-D-Xyl-(1-&gt;4)-Rib-ol-P-Rib-ol-P-3-beta-D-GalNAc-(1-&gt;3)-beta-D-GlcNAc-(1-&gt;4)-O-6-P-alpha-D-Man}-L-Thr-[protein] + UDP-alpha-D-xylose = 3-O-{(1-&gt;[3)-alpha-D-Xyl-(1-&gt;3)-beta-D-GlcA-(1-&gt;](n+1)-4)-beta-D-Xyl-(1-&gt;4)-Rib-ol-P-Rib-ol-P-3-beta-D-GalNAc-(1-&gt;3)-beta-D-GlcNAc-(1-&gt;4)-O-6-P-alpha-D-Man}-L-Thr-[protein] + UDP + H(+). The protein operates within protein modification; protein glycosylation. In terms of biological role, bifunctional glycosyltransferase with both alpha-1,3-xylosyltransferase and beta-1,3-glucuronyltransferase activities involved in the maturation of alpha-dystroglycan (DAG1) by glycosylation leading to DAG1 binding to laminin G-like domain-containing extracellular proteins with high affinity and in a phosphorylated-O-mannosyl trisaccharide dependent manner. Elongates the glucuronyl-beta-1,4-xylose-beta disaccharide primer structure by adding repeating units [-3-Xylose-alpha-1,3-GlcA-beta-1-] to produce a heteropolysaccharide. Supports the maturation of DAG1 more effectively than LARGE1. In addition, can modify both heparan sulfate (HS)- and chondroitin/dermatan sulfate (CS/DS)-proteoglycans (PGs), namely GPC4, with a glycosaminoglycan (GAG)-like polysaccharide composed of xylose and glucuronic acid to confer laminin binding. The protein is Xylosyl- and glucuronyltransferase LARGE2 of Homo sapiens (Human).